Consider the following 311-residue polypeptide: tRNA dimethylallyltransferase (311 aa).

14–21 (GPTAVGKT) contacts ATP. Substrate is bound at residue 16–21 (TAVGKT). The interaction with substrate tRNA stretch occupies residues 39 to 42 (DSMQ).

The protein belongs to the IPP transferase family. As to quaternary structure, monomer. Mg(2+) is required as a cofactor.

It catalyses the reaction adenosine(37) in tRNA + dimethylallyl diphosphate = N(6)-dimethylallyladenosine(37) in tRNA + diphosphate. Catalyzes the transfer of a dimethylallyl group onto the adenine at position 37 in tRNAs that read codons beginning with uridine, leading to the formation of N6-(dimethylallyl)adenosine (i(6)A). The chain is tRNA dimethylallyltransferase from Lactiplantibacillus plantarum (strain ATCC BAA-793 / NCIMB 8826 / WCFS1) (Lactobacillus plantarum).